We begin with the raw amino-acid sequence, 137 residues long: Cellular retinoic acid-binding protein 1 (137 aa).

Positions 21-31 match the Nuclear localization signal motif; it reads KALGVNAMLRK. Residue 132 to 134 coordinates all-trans-retinoate; that stretch reads RIY.

This sequence belongs to the calycin superfamily. Fatty-acid binding protein (FABP) family.

The protein resides in the cytoplasm. Cytosolic CRABPs may regulate the access of retinoic acid to the nuclear retinoic acid receptors. The sequence is that of Cellular retinoic acid-binding protein 1 (Crabp1) from Mus musculus (Mouse).